A 340-amino-acid chain; its full sequence is UPF0324 membrane protein OB3406 (340 aa).

The next 9 membrane-spanning stretches (helical) occupy residues 12–31, 36–58, 94–116, 126–148, 155–177, 215–237, 257–276, 281–303, and 315–337; these read SFYT…GVLC, LDIM…TIGL, GLHA…YSLA, SILT…APLV, TAVS…TMMY, IAIV…IGIY, IPWF…IGFL, VNLL…GLNV, and VFFA…IYVM.

The protein belongs to the UPF0324 family.

It localises to the cell membrane. This is UPF0324 membrane protein OB3406 from Oceanobacillus iheyensis (strain DSM 14371 / CIP 107618 / JCM 11309 / KCTC 3954 / HTE831).